The chain runs to 298 residues: Ketohexokinase (298 aa).

Beta-D-fructose-binding residues include Asp15, Gly41, Asn42, and Asn45. Residues Arg108, 226 to 229, and 255 to 258 contribute to the ATP site; these read AEEG and GAGD. Asp258 is a binding site for beta-D-fructose.

Belongs to the carbohydrate kinase PfkB family. As to quaternary structure, homodimer. In terms of tissue distribution, most abundant in liver, kidney, gut, spleen and pancreas. Low levels also found in adrenal, muscle, brain and eye.

The enzyme catalyses beta-D-fructose + ATP = beta-D-fructose 1-phosphate + ADP + H(+). Its pathway is carbohydrate metabolism; fructose metabolism. Its activity is regulated as follows. Requires potassium. Inhibition by ADP. Functionally, catalyzes the phosphorylation of the ketose sugar fructose to fructose-1-phosphate. The chain is Ketohexokinase from Homo sapiens (Human).